Here is a 253-residue protein sequence, read N- to C-terminus: Isoprenyl transferase (253 aa).

Asp-30 is an active-site residue. Mg(2+) is bound at residue Asp-30. Substrate contacts are provided by residues 31–34, Trp-35, His-51, and 79–81; these read GNRR and STE. Residue Asn-82 is the Proton acceptor of the active site. Substrate is bound by residues Phe-83, Arg-85, Arg-202, and 208–210; that span reads RVS. Residue Glu-221 coordinates Mg(2+).

It belongs to the UPP synthase family. In terms of assembly, homodimer. The cofactor is Mg(2+).

In terms of biological role, catalyzes the condensation of isopentenyl diphosphate (IPP) with allylic pyrophosphates generating different type of terpenoids. This Chlamydia muridarum (strain MoPn / Nigg) protein is Isoprenyl transferase.